The following is a 505-amino-acid chain: Peroxisome proliferator-activated receptor gamma (505 aa).

Threonine 84 carries O-linked (GlcNAc) threonine glycosylation. Residue serine 112 is modified to Phosphoserine; by MAPK. The nuclear receptor DNA-binding region spans 136 to 210; it reads AIECRVCGDK…VGMSHNAIRF (75 aa). NR C4-type zinc fingers lie at residues 139 to 159 and 176 to 198; these read CRVCGDKASGFHYGVHACEGC and CDLNCRIHKKSRNKCQYCRFQKC. The interaction with FAM120B stretch occupies residues 205 to 280; that stretch reads HNAIRFGRMP…DKSPFVIYDM (76 aa). Residues 238 to 503 enclose the NR LBD domain; that stretch reads DLRALAKHLY…HPLLQEIYKD (266 aa). A Glycyl lysine isopeptide (Lys-Gly) (interchain with G-Cter in ubiquitin) cross-link involves residue lysine 252. The short motif at 495-503 is the 9aaTAD element; that stretch reads PLLQEIYKD.

It belongs to the nuclear hormone receptor family. NR1 subfamily. In terms of assembly, heterodimer with other nuclear receptors, such as RXRA. The heterodimer with the retinoic acid receptor RXRA is called adipocyte-specific transcription factor ARF6. Interacts with NCOA6 coactivator, leading to a strong increase in transcription of target genes. Interacts with coactivator PPARBP, leading to a mild increase in transcription of target genes. Interacts with NOCA7 in a ligand-inducible manner. Interacts with NCOA1 and NCOA2 LXXLL motifs. Interacts with ASXL1, ASXL2, DNTTIP2, FAM120B, MAP2K1/MEK1, NR0B2, PDPK1, PRDM16, PRMT2 and TGFB1I1. Interacts (when activated by agonist) with PPP5C. Interacts with HELZ2 and THRAP3; the interaction stimulates the transcriptional activity of PPARG. Interacts with PER2, the interaction is ligand dependent and blocks PPARG recruitment to target promoters. Interacts with NOCT. Interacts with FOXO1 (acetylated form). Interacts with ACTN4. Interacts (when in the liganded conformation) with GPS2. Interacts with CRY1 and CRY2 in a ligand-dependent manner. In the absence of hormonal ligand, interacts with TACC1. In macrophages, interacts with PAQR3 and STUB1; the interactions promote PPARG poylubiquitination and STUB1-mediated degradation. In terms of processing, O-GlcNAcylation at Thr-84 reduces transcriptional activity in adipocytes. Phosphorylated in basal conditions and dephosphorylated when treated with the ligand. May be dephosphorylated by PPP5C. The phosphorylated Ser-112 form is recognized by PER2 and repressed, dephosphorylation at Ser-112 induces adipogenic activity. Ser-112 phosphorylation levels are reduced by 65% in brown adipose tissue compared to white adipose tissue. Post-translationally, ubiquitinated by E3 ubiquitin-protein ligase complex containing FBXO9; leading to proteasomal degradation. In terms of processing, ubiquitinated by E3 ubiquitin-protein ligase complex containing FBXO9; leading to proteasomal degradation. Ubiquitinated at Lys-252 by TRIM55 leading to proteasomal degradation. Ubiquitinated by E3 ubiquitin-protein ligase STUB1/CHIP; leading to proteasomal degradation. Highest expression in white and brown adipose tissue. Also found in liver, skeletal muscle, heart, adrenal gland, spleen, kidney and intestine. Isoform 2 is more abundant than isoform 1 in adipose tissue.

It localises to the nucleus. Its subcellular location is the cytoplasm. Its activity is regulated as follows. PDPK1 activates its transcriptional activity independently of its kinase activity. In terms of biological role, nuclear receptor that binds peroxisome proliferators such as hypolipidemic drugs and fatty acids. Once activated by a ligand, the nuclear receptor binds to DNA specific PPAR response elements (PPRE) and modulates the transcription of its target genes, such as acyl-CoA oxidase. It therefore controls the peroxisomal beta-oxidation pathway of fatty acids. Key regulator of adipocyte differentiation and glucose homeostasis. ARF6 acts as a key regulator of the tissue-specific adipocyte P2 (aP2) enhancer. Acts as a critical regulator of gut homeostasis by suppressing NF-kappa-B-mediated pro-inflammatory responses. Plays a role in the regulation of cardiovascular circadian rhythms by regulating the transcription of BMAL1 in the blood vessels. This chain is Peroxisome proliferator-activated receptor gamma (Pparg), found in Mus musculus (Mouse).